Consider the following 483-residue polypeptide: Regulatory protein ViaA (483 aa).

The protein belongs to the ViaA family. In terms of assembly, homodimer. Interacts with RavA.

Its subcellular location is the cytoplasm. Functionally, component of the RavA-ViaA chaperone complex, which may act on the membrane to optimize the function of some of the respiratory chains. ViaA stimulates the ATPase activity of RavA. The sequence is that of Regulatory protein ViaA from Escherichia coli O81 (strain ED1a).